We begin with the raw amino-acid sequence, 532 residues long: CTP synthase (532 aa).

The tract at residues 1–267 (MAKFIFVTGG…QDIIIEQLQL (267 aa)) is amidoligase domain. CTP is bound at residue serine 13. Serine 13 contributes to the UTP binding site. An ATP-binding site is contributed by 14 to 19 (GLGKGI). L-glutamine is bound at residue tyrosine 54. ATP is bound at residue aspartate 71. Aspartate 71 and glutamate 141 together coordinate Mg(2+). Residues 148–150 (DIE), 188–193 (KTKPIQ), and lysine 224 contribute to the CTP site. UTP contacts are provided by residues 188–193 (KTKPIQ) and lysine 224. The Glutamine amidotransferase type-1 domain occupies 292–532 (EISFVGKYIE…FIKAIVENNK (241 aa)). Residue glycine 354 coordinates L-glutamine. Cysteine 381 serves as the catalytic Nucleophile; for glutamine hydrolysis. L-glutamine is bound by residues 382 to 385 (LGMQ), glutamate 405, and arginine 461. Residues histidine 506 and glutamate 508 contribute to the active site.

This sequence belongs to the CTP synthase family. In terms of assembly, homotetramer.

It catalyses the reaction UTP + L-glutamine + ATP + H2O = CTP + L-glutamate + ADP + phosphate + 2 H(+). The catalysed reaction is L-glutamine + H2O = L-glutamate + NH4(+). The enzyme catalyses UTP + NH4(+) + ATP = CTP + ADP + phosphate + 2 H(+). Its pathway is pyrimidine metabolism; CTP biosynthesis via de novo pathway; CTP from UDP: step 2/2. Its activity is regulated as follows. Allosterically activated by GTP, when glutamine is the substrate; GTP has no effect on the reaction when ammonia is the substrate. The allosteric effector GTP functions by stabilizing the protein conformation that binds the tetrahedral intermediate(s) formed during glutamine hydrolysis. Inhibited by the product CTP, via allosteric rather than competitive inhibition. Catalyzes the ATP-dependent amination of UTP to CTP with either L-glutamine or ammonia as the source of nitrogen. Regulates intracellular CTP levels through interactions with the four ribonucleotide triphosphates. The protein is CTP synthase of Mycoplasma mycoides subsp. mycoides SC (strain CCUG 32753 / NCTC 10114 / PG1).